We begin with the raw amino-acid sequence, 318 residues long: Pantothenate kinase (318 aa).

96–103 (GSVAVGKS) lines the ATP pocket.

The protein belongs to the prokaryotic pantothenate kinase family.

The protein localises to the cytoplasm. It catalyses the reaction (R)-pantothenate + ATP = (R)-4'-phosphopantothenate + ADP + H(+). It participates in cofactor biosynthesis; coenzyme A biosynthesis; CoA from (R)-pantothenate: step 1/5. The protein is Pantothenate kinase of Rhodopseudomonas palustris (strain BisA53).